We begin with the raw amino-acid sequence, 39 residues long: MTLDRTYPIFTVRWLAIHGLAVPTVFFLGSISAMQFIQR.

A helical membrane pass occupies residues 14-30 (WLAIHGLAVPTVFFLGS). His18 contacts heme.

The protein belongs to the PsbE/PsbF family. Heterodimer of an alpha subunit and a beta subunit. PSII is composed of 1 copy each of membrane proteins PsbA, PsbB, PsbC, PsbD, PsbE, PsbF, PsbH, PsbI, PsbJ, PsbK, PsbL, PsbM, PsbT, PsbX, PsbY, PsbZ, Psb30/Ycf12, at least 3 peripheral proteins of the oxygen-evolving complex and a large number of cofactors. It forms dimeric complexes. Heme b serves as cofactor.

The protein localises to the plastid. It is found in the chloroplast thylakoid membrane. Functionally, this b-type cytochrome is tightly associated with the reaction center of photosystem II (PSII). PSII is a light-driven water:plastoquinone oxidoreductase that uses light energy to abstract electrons from H(2)O, generating O(2) and a proton gradient subsequently used for ATP formation. It consists of a core antenna complex that captures photons, and an electron transfer chain that converts photonic excitation into a charge separation. This Psilotum nudum (Whisk fern) protein is Cytochrome b559 subunit beta.